The chain runs to 417 residues: 2-oxoglutarate and iron-dependent oxygenase JMJD4 (417 aa).

One can recognise a JmjC domain in the interval 142–301 (CRDFPVEDVF…NMWRFLQQEL (160 aa)). Residues His189, Asp191, and His269 each contribute to the Fe cation site.

This sequence belongs to the JMJD6 family. As to quaternary structure, interacts with ETF1. Interacts with the ETF1-GSPT1 complex. Requires Fe(2+) as cofactor.

The protein localises to the cytoplasm. The catalysed reaction is L-lysyl-[protein] + 2-oxoglutarate + O2 = 4-hydroxy-L-lysyl-[protein] + succinate + CO2. Catalyzes the 2-oxoglutarate and iron-dependent C4-lysyl hydroxylation of ETF1 at 'Lys-63' thereby promoting the translational termination efficiency of ETF1. In Homo sapiens (Human), this protein is 2-oxoglutarate and iron-dependent oxygenase JMJD4 (JMJD4).